The following is a 209-amino-acid chain: Uracil phosphoribosyltransferase (209 aa).

Residues Arg79, Arg104, and Asp131–Ser139 each bind 5-phospho-alpha-D-ribose 1-diphosphate. Residues Ile194 and Gly199–Ala201 contribute to the uracil site. Asp200 is a binding site for 5-phospho-alpha-D-ribose 1-diphosphate.

This sequence belongs to the UPRTase family. It depends on Mg(2+) as a cofactor.

The enzyme catalyses UMP + diphosphate = 5-phospho-alpha-D-ribose 1-diphosphate + uracil. Its pathway is pyrimidine metabolism; UMP biosynthesis via salvage pathway; UMP from uracil: step 1/1. Allosterically activated by GTP. Catalyzes the conversion of uracil and 5-phospho-alpha-D-ribose 1-diphosphate (PRPP) to UMP and diphosphate. This chain is Uracil phosphoribosyltransferase, found in Staphylococcus epidermidis (strain ATCC 35984 / DSM 28319 / BCRC 17069 / CCUG 31568 / BM 3577 / RP62A).